We begin with the raw amino-acid sequence, 392 residues long: DNA-directed RNA polymerase subunit Rpo1C (392 aa).

This sequence belongs to the RNA polymerase beta' chain family. In terms of assembly, part of the RNA polymerase complex.

It is found in the cytoplasm. It catalyses the reaction RNA(n) + a ribonucleoside 5'-triphosphate = RNA(n+1) + diphosphate. Functionally, DNA-dependent RNA polymerase (RNAP) catalyzes the transcription of DNA into RNA using the four ribonucleoside triphosphates as substrates. Forms part of the jaw domain. This Saccharolobus islandicus (strain Y.N.15.51 / Yellowstone #2) (Sulfolobus islandicus) protein is DNA-directed RNA polymerase subunit Rpo1C.